The following is a 925-amino-acid chain: Eukaryotic translation initiation factor 3 subunit A (925 aa).

Positions glutamine 108–glutamate 127 are disordered. Basic and acidic residues predominate over residues aspartate 112 to glutamine 121. In terms of domain architecture, PCI spans phenylalanine 324–phenylalanine 498. Disordered regions lie at residues proline 509–asparagine 544 and lysine 839–glycine 925. Coiled-coil stretches lie at residues glutamate 534–leucine 666 and serine 785–serine 885. The segment covering lysine 839–asparagine 880 has biased composition (basic and acidic residues). Over residues arginine 916 to glycine 925 the composition is skewed to basic residues.

This sequence belongs to the eIF-3 subunit A family. As to quaternary structure, component of the eukaryotic translation initiation factor 3 (eIF-3) complex.

The protein resides in the cytoplasm. RNA-binding component of the eukaryotic translation initiation factor 3 (eIF-3) complex, which is involved in protein synthesis of a specialized repertoire of mRNAs and, together with other initiation factors, stimulates binding of mRNA and methionyl-tRNAi to the 40S ribosome. The eIF-3 complex specifically targets and initiates translation of a subset of mRNAs involved in cell proliferation. The sequence is that of Eukaryotic translation initiation factor 3 subunit A from Kluyveromyces lactis (strain ATCC 8585 / CBS 2359 / DSM 70799 / NBRC 1267 / NRRL Y-1140 / WM37) (Yeast).